We begin with the raw amino-acid sequence, 30 residues long: Conopeptide Vi002 (30 aa).

In terms of tissue distribution, expressed by the venom gland.

It localises to the secreted. The sequence is that of Conopeptide Vi002 from Conus virgo (Virgin cone).